Consider the following 89-residue polypeptide: Large ribosomal subunit protein bL27 (89 aa).

The segment at 1–26 is disordered; that stretch reads MATKKAGGSSKNGRDSAGRRLGLKKS.

It belongs to the bacterial ribosomal protein bL27 family.

This is Large ribosomal subunit protein bL27 from Orientia tsutsugamushi (strain Ikeda) (Rickettsia tsutsugamushi).